The primary structure comprises 286 residues: Acetylglutamate kinase (286 aa).

Substrate is bound by residues 69–70 (GG), R91, and N185.

It belongs to the acetylglutamate kinase family. ArgB subfamily.

The protein resides in the cytoplasm. It catalyses the reaction N-acetyl-L-glutamate + ATP = N-acetyl-L-glutamyl 5-phosphate + ADP. The protein operates within amino-acid biosynthesis; L-arginine biosynthesis; N(2)-acetyl-L-ornithine from L-glutamate: step 2/4. Catalyzes the ATP-dependent phosphorylation of N-acetyl-L-glutamate. The polypeptide is Acetylglutamate kinase (Chlorobium chlorochromatii (strain CaD3)).